Here is a 118-residue protein sequence, read N- to C-terminus: Large ribosomal subunit protein bL19 (118 aa).

This sequence belongs to the bacterial ribosomal protein bL19 family.

Functionally, this protein is located at the 30S-50S ribosomal subunit interface and may play a role in the structure and function of the aminoacyl-tRNA binding site. The polypeptide is Large ribosomal subunit protein bL19 (Helicobacter pylori (strain P12)).